The sequence spans 180 residues: Protein YOP1 (180 aa).

Ser2 carries the post-translational modification N-acetylserine. The segment at Ser2 to Thr17 is interaction with YIP1. The Cytoplasmic portion of the chain corresponds to Ser2–Pro35. The helical transmembrane segment at Lys36–Val55 threads the bilayer. Residues Gly56–Gly57 are Lumenal-facing. A helical membrane pass occupies residues Val58–Ala78. Topologically, residues Leu79 to Thr88 are cytoplasmic. A helical membrane pass occupies residues Gln89 to Phe105. The Lumenal segment spans residues Trp106–Lys108. The helical transmembrane segment at Ala109–Tyr127 threads the bilayer. The Cytoplasmic portion of the chain corresponds to Ile128–His180.

It belongs to the DP1 family. In terms of assembly, oligomer. Interacts with YIP1.

The protein localises to the endoplasmic reticulum membrane. It is found in the golgi apparatus membrane. In terms of biological role, required to generate and maintain the structure of the tubular endoplasmic reticulum network and the vacuole. Induces high curvature in membranes and causes membrane tubule formation. Involved in membrane/vesicle trafficking. The sequence is that of Protein YOP1 (YOP1) from Saccharomyces cerevisiae (strain ATCC 204508 / S288c) (Baker's yeast).